A 421-amino-acid chain; its full sequence is Phosphoglycerate kinase, cytosolic (421 aa).

Positions 23, 24, 25, 26, 39, 61, 62, 64, 65, 135, 172, and 173 each coordinate (2R)-3-phosphoglycerate. Positions 218 and 219 each coordinate ADP. Gly218 is a CDP binding site. The AMP site is built by Ala219 and Lys220. Ala219 provides a ligand contact to ATP. Ala219 contributes to the Mg(2+) binding site. Lys220 serves as a coordination point for (2R)-3-phosphoglycerate. Residue Asp223 participates in CDP binding. Asp223 contributes to the Mg(2+) binding site. ADP contacts are provided by Lys224 and Gly242. Lys224 serves as a coordination point for AMP. Lys224 is an ATP binding site. Position 242 (Gly242) interacts with CDP. AMP contacts are provided by Ala243 and Ala315. The ATP site is built by Ala243 and Ala315. ADP contacts are provided by Ala315 and Asn339. Gly340 and Phe345 together coordinate CDP. ADP-binding residues include Phe345, Glu346, Asp378, and Ser379. AMP is bound at residue Glu346. ATP contacts are provided by Glu346, Asp378, and Ser379. Residue Asp378 participates in Mg(2+) binding.

Belongs to the phosphoglycerate kinase family. Monomer. Mg(2+) is required as a cofactor.

It localises to the cytoplasm. It carries out the reaction (2R)-3-phosphoglycerate + ATP = (2R)-3-phospho-glyceroyl phosphate + ADP. Its pathway is carbohydrate degradation; glycolysis; pyruvate from D-glyceraldehyde 3-phosphate: step 2/5. The polypeptide is Phosphoglycerate kinase, cytosolic (Trypanosoma brucei brucei).